The sequence spans 533 residues: UDP-glucuronosyltransferase 1A1 (533 aa).

The N-terminal stretch at 1 to 25 is a signal peptide; the sequence is MAVESQGGRPLVLGLLLCVLGPVVS. N-linked (GlcNAc...) asparagine glycans are attached at residues Asn102, Asn295, and Asn347. A helical membrane pass occupies residues 491 to 507; the sequence is VIGFLLAVVLTVAFITF.

Belongs to the UDP-glycosyltransferase family. As to quaternary structure, homodimer. Homooligomer. Interacts with UGT1A3, UGT1A4, UGT1A6, UGT1A7, UGT1A8, UGT1A9 and UGT1A10 to form heterodimers. Isoform 1 interacts with isoform 2/i2 suggesting that oligomerization is involved in negative regulation of transferase activity by isoform 2. Isoform 1 also interacts with respective i2 isoforms of UGT1A3, UGT1A4, UGT1A6, UGT1A7, UGT1A8, UGT1A9 and UGT1A10. As to expression, expressed in liver, colon and small intestine. Not expressed in kidney, esophagus and skin. Expressed in liver, colon, small intestine and kidney. Not expressed in esophagus and skin.

The protein resides in the endoplasmic reticulum membrane. The protein localises to the cytoplasm. It is found in the perinuclear region. The enzyme catalyses glucuronate acceptor + UDP-alpha-D-glucuronate = acceptor beta-D-glucuronoside + UDP + H(+). It carries out the reaction 17beta-estradiol + UDP-alpha-D-glucuronate = 17beta-estradiol 3-O-(beta-D-glucuronate) + UDP + H(+). It catalyses the reaction 2-hydroxyestrone + UDP-alpha-D-glucuronate = 2-hydroxyestrone 3-O-(beta-D-glucuronate) + UDP + H(+). The catalysed reaction is 2-hydroxy-17beta-estradiol + UDP-alpha-D-glucuronate = 2-hydroxy-17beta-estradiol 3-O-(beta-D-glucuronate) + UDP + H(+). The enzyme catalyses 2-methoxy-17beta-estradiol + UDP-alpha-D-glucuronate = 2-methoxy-17beta-estradiol 3-O-(beta-D-glucuronate) + UDP + H(+). It carries out the reaction 17alpha-estradiol + UDP-alpha-D-glucuronate = 17alpha-estradiol 3-O-(beta-D-glucuronate) + UDP + H(+). It catalyses the reaction 16beta,17beta-estriol + UDP-alpha-D-glucuronate = 16beta,17beta-estriol 16-O-(beta-D-glucuronate) + UDP + H(+). The catalysed reaction is losartan + UDP-alpha-D-glucuronate = losartan-2-N-beta-D-glucuronide + UDP. The enzyme catalyses prunetin + UDP-alpha-D-glucuronate = prunetin-4'-O-beta-D-glucuronide + UDP. It carries out the reaction SN-38 + UDP-alpha-D-glucuronate = SN-38 O-beta-D-glucuronide + UDP + H(+). It catalyses the reaction (4Z,15Z)-bilirubin IXalpha + UDP-alpha-D-glucuronate = (4Z,15Z)-bilirubin IXalpha C12-beta-D-glucuronoside + UDP. The catalysed reaction is (4Z,15Z)-bilirubin IXalpha + UDP-alpha-D-glucuronate = (4Z,15Z)-bilirubin IXalpha C8-beta-D-glucuronoside + UDP. The enzyme catalyses (4Z,15Z)-bilirubin IXalpha C8-beta-D-glucuronoside + UDP-alpha-D-glucuronate = (4Z,15Z)-bilirubin IXalpha C8,C12-beta-D-bisglucuronoside + UDP. It carries out the reaction (4Z,15Z)-bilirubin IXalpha C12-beta-D-glucuronoside + UDP-alpha-D-glucuronate = (4Z,15Z)-bilirubin IXalpha C8,C12-beta-D-bisglucuronoside + UDP. It catalyses the reaction 8-iso-prostaglandin F2alpha + UDP-alpha-D-glucuronate = 8-iso-prostaglandin F2alpha-glucuronide + UDP + H(+). The catalysed reaction is (5Z,8Z,11Z,14Z)-eicosatetraenoate + UDP-alpha-D-glucuronate = O-[(5Z),(8Z),(11Z),(14Z)-eicosatetraenoyl]-beta-D-glucuronate + UDP. The enzyme catalyses 15-hydroxy-(5Z,8Z,11Z,13E)-eicosatetraenoate + UDP-alpha-D-glucuronate = 15-O-(beta-D-glucuronosyl)-(5Z,8Z,11Z,14Z)-eicosatetraenoate + UDP + H(+). It carries out the reaction 20-hydroxy-(5Z,8Z,11Z,14Z)-eicosatetraenoate + UDP-alpha-D-glucuronate = 20-O-(beta-D-glucuronosyl)-(5Z,8Z,11Z,14Z)-eicosatetraenoate + UDP + H(+). It catalyses the reaction prostaglandin B1 + UDP-alpha-D-glucuronate = 15-O-(beta-D-glucuronosyl)-prostaglandin B1 + UDP + H(+). The catalysed reaction is (E)-ferulate + UDP-alpha-D-glucuronate = (E)-4-O-(beta-D-glucuronosyl)-ferulate + UDP + H(+). The enzyme catalyses (E)-ferulate + UDP-alpha-D-glucuronate = (E)-ferulic acid beta-D-glucuronate ester + UDP. In terms of biological role, UDP-glucuronosyltransferase (UGT) that catalyzes phase II biotransformation reactions in which lipophilic substrates are conjugated with glucuronic acid to increase the metabolite's water solubility, thereby facilitating excretion into either the urine or bile. Essential for the elimination and detoxification of drugs, xenobiotics and endogenous compounds. Catalyzes the glucuronidation of endogenous estrogen hormones such as estradiol, estrone and estriol. Involved in the glucuronidation of bilirubin, a degradation product occurring in the normal catabolic pathway that breaks down heme in vertebrates. Involved in the glucuronidation of arachidonic acid (AA) and AA-derived eicosanoids including 15-HETE, 20-HETE, PGB1 and F2-isoprostane (8-iso-PGF2alpha). Involved in the glucuronidation of the phytochemical ferulic acid at the phenolic or the carboxylic acid group. Also catalyzes the glucuronidation the isoflavones genistein, daidzein, glycitein, formononetin, biochanin A and prunetin, which are phytoestrogens with anticancer and cardiovascular properties. Involved in the glucuronidation of the AGTR1 angiotensin receptor antagonist losartan, a drug which can inhibit the effect of angiotensin II. Involved in the biotransformation of 7-ethyl-10-hydroxycamptothecin (SN-38), the pharmacologically active metabolite of the anticancer drug irinotecan. Functionally, lacks UGT glucuronidation activity but acts as a negative regulator of isoform 1. The chain is UDP-glucuronosyltransferase 1A1 from Homo sapiens (Human).